The primary structure comprises 346 residues: Porphobilinogen deaminase (346 aa).

Position 242 is an S-(dipyrrolylmethanemethyl)cysteine (C242). The tract at residues 317-346 (ATEPGARSGTGAVRPPETDLSNPSPMENPQ) is disordered. The segment covering 335–346 (DLSNPSPMENPQ) has biased composition (polar residues).

The protein belongs to the HMBS family. In terms of assembly, monomer. Dipyrromethane is required as a cofactor.

The enzyme catalyses 4 porphobilinogen + H2O = hydroxymethylbilane + 4 NH4(+). It functions in the pathway porphyrin-containing compound metabolism; protoporphyrin-IX biosynthesis; coproporphyrinogen-III from 5-aminolevulinate: step 2/4. Its function is as follows. Tetrapolymerization of the monopyrrole PBG into the hydroxymethylbilane pre-uroporphyrinogen in several discrete steps. The chain is Porphobilinogen deaminase from Nocardia farcinica (strain IFM 10152).